We begin with the raw amino-acid sequence, 361 residues long: Sensor protein VanSC (361 aa).

2 helical membrane-spanning segments follow: residues 16 to 36 and 59 to 79; these read FVTT…IRFI and WLFC…IYYM. The 216-residue stretch at 144-359 folds into the Histidine kinase domain; that stretch reads YLAHDLRTPL…IFNVRLPKPA (216 aa). Phosphohistidine; by autocatalysis is present on His147. Glu252 is a binding site for Mg(2+).

Autophosphorylated.

The protein localises to the membrane. The catalysed reaction is ATP + protein L-histidine = ADP + protein N-phospho-L-histidine.. This is Sensor protein VanSC from Enterococcus gallinarum.